The following is a 290-amino-acid chain: Chitinase 10 (290 aa).

The first 28 residues, methionine 1–glycine 28, serve as a signal peptide directing secretion. 2 disulfide bridges follow: cysteine 70/cysteine 132 and cysteine 144/cysteine 153. The Proton donor role is filled by glutamate 114. Residues asparagine 193 and asparagine 234 are each glycosylated (N-linked (GlcNAc...) asparagine). An intrachain disulfide couples cysteine 252 to cysteine 284.

Belongs to the glycosyl hydrolase 19 family. Chitinase class I subfamily. In terms of tissue distribution, expressed at low levels in roots, leaves and meristems.

It catalyses the reaction Random endo-hydrolysis of N-acetyl-beta-D-glucosaminide (1-&gt;4)-beta-linkages in chitin and chitodextrins.. The polypeptide is Chitinase 10 (Cht10) (Oryza sativa subsp. japonica (Rice)).